A 339-amino-acid chain; its full sequence is Phosphate acyltransferase (339 aa).

This sequence belongs to the PlsX family. In terms of assembly, homodimer. Probably interacts with PlsY.

Its subcellular location is the cytoplasm. It carries out the reaction a fatty acyl-[ACP] + phosphate = an acyl phosphate + holo-[ACP]. The protein operates within lipid metabolism; phospholipid metabolism. In terms of biological role, catalyzes the reversible formation of acyl-phosphate (acyl-PO(4)) from acyl-[acyl-carrier-protein] (acyl-ACP). This enzyme utilizes acyl-ACP as fatty acyl donor, but not acyl-CoA. The chain is Phosphate acyltransferase from Acetivibrio thermocellus (strain ATCC 27405 / DSM 1237 / JCM 9322 / NBRC 103400 / NCIMB 10682 / NRRL B-4536 / VPI 7372) (Clostridium thermocellum).